The following is a 378-amino-acid chain: MKSSKSDLFIYKTWFKLLVLYFVMFVLSATVPIAASFPGLGFPCYYNALVNYSAINLTERNVAKHLTPTLYLEEPEMFAYMTFTFLVDCFAAVYYFLGALAIMLAKRHFVVSLTTLSQWIAMVGTPTLILIGMWRMWTIQLFIQTLSYKHIYLSAFVYLIHFLLSFLHTQCYISRNSQLWSLKVLEQGIPPNTLLDTVVFTIKPLLANCQLFCLGLEMLVFSLSFMMAIGNSFYVLVSDIVFGAINLYLALVLFWVLLTELYLVKYMTFVMGFYLGGLIGCIFLLVPLWRYEQIFVAANLRSPILINILVIFFLCTLSALVRLLRMTWFSPTKPSYEPIQLKNIKHRRVKLQSPSGPSILEEGSSDEGSEDSEEEEEL.

Topologically, residues 1 to 16 (MKSSKSDLFIYKTWFK) are intravirion. Residues 17 to 37 (LLVLYFVMFVLSATVPIAASF) traverse the membrane as a helical segment. The Virion surface portion of the chain corresponds to 38 to 84 (PGLGFPCYYNALVNYSAINLTERNVAKHLTPTLYLEEPEMFAYMTFT). Residues 85–105 (FLVDCFAAVYYFLGALAIMLA) form a helical membrane-spanning segment. At 106-118 (KRHFVVSLTTLSQ) the chain is on the intravirion side. A helical membrane pass occupies residues 119-139 (WIAMVGTPTLILIGMWRMWTI). The Virion surface portion of the chain corresponds to 140 to 150 (QLFIQTLSYKH). A helical transmembrane segment spans residues 151 to 171 (IYLSAFVYLIHFLLSFLHTQC). Topologically, residues 172-210 (YISRNSQLWSLKVLEQGIPPNTLLDTVVFTIKPLLANCQ) are intravirion. The helical transmembrane segment at 211 to 231 (LFCLGLEMLVFSLSFMMAIGN) threads the bilayer. Topologically, residues 232-239 (SFYVLVSD) are virion surface. The helical transmembrane segment at 240 to 260 (IVFGAINLYLALVLFWVLLTE) threads the bilayer. Residues 261–268 (LYLVKYMT) are Intravirion-facing. The chain crosses the membrane as a helical span at residues 269 to 289 (FVMGFYLGGLIGCIFLLVPLW). At 290-303 (RYEQIFVAANLRSP) the chain is on the virion surface side. The chain crosses the membrane as a helical span at residues 304 to 324 (ILINILVIFFLCTLSALVRLL). The Intravirion segment spans residues 325-378 (RMTWFSPTKPSYEPIQLKNIKHRRVKLQSPSGPSILEEGSSDEGSEDSEEEEEL). The segment at 347-378 (RRVKLQSPSGPSILEEGSSDEGSEDSEEEEEL) is disordered. Acidic residues predominate over residues 363-378 (GSSDEGSEDSEEEEEL).

The protein belongs to the herpesviridae glycoprotein M family. As to quaternary structure, interacts (via N-terminus) with gN (via N-terminus). The gM-gN heterodimer forms the gCII complex.

The protein localises to the virion membrane. Its subcellular location is the host Golgi apparatus. It localises to the host trans-Golgi network. It is found in the host endosome membrane. The protein resides in the host nucleus inner membrane. In terms of biological role, envelope glycoprotein important for virion assembly and egress. Plays a role in the correct incorporation of gH-gL into virion membrane. Directs the glycoprotein N (gN) to the host trans-Golgi network. This chain is Envelope glycoprotein M, found in Equus caballus (Horse).